A 93-amino-acid polypeptide reads, in one-letter code: Ferredoxin-2 (93 aa).

The 90-residue stretch at 2 to 91 (YKVTLKTPDG…DVVIETHKED (90 aa)) folds into the 2Fe-2S ferredoxin-type domain. C37, C42, C45, and C75 together coordinate [2Fe-2S] cluster.

Belongs to the 2Fe2S plant-type ferredoxin family. [2Fe-2S] cluster serves as cofactor.

It localises to the plastid. It is found in the chloroplast. Functionally, ferredoxins are iron-sulfur proteins that transfer electrons in a wide variety of metabolic reactions. The chain is Ferredoxin-2 from Equisetum telmateia (Great horsetail).